Reading from the N-terminus, the 66-residue chain is Large ribosomal subunit protein uL29 (66 aa).

It belongs to the universal ribosomal protein uL29 family.

The polypeptide is Large ribosomal subunit protein uL29 (Francisella tularensis subsp. tularensis (strain FSC 198)).